A 75-amino-acid polypeptide reads, in one-letter code: Transcription attenuation protein MtrB (75 aa).

It belongs to the MtrB family. Oligomer of 11 identical subunits arranged in doughnut-like structure.

Required for transcription attenuation control in the Trp operon. This trans-acting factor seems to recognize a 10 bases nucleotide sequence in the Trp leader transcript causing transcription termination. Binds the leader RNA only in presence of L-tryptophan. The polypeptide is Transcription attenuation protein MtrB (Bacillus velezensis (strain DSM 23117 / BGSC 10A6 / LMG 26770 / FZB42) (Bacillus amyloliquefaciens subsp. plantarum)).